Here is a 239-residue protein sequence, read N- to C-terminus: Tryptophan synthase alpha chain (239 aa).

Residues Glu-34 and Asp-45 each act as proton acceptor in the active site.

The protein belongs to the TrpA family. In terms of assembly, tetramer of two alpha and two beta chains.

The enzyme catalyses (1S,2R)-1-C-(indol-3-yl)glycerol 3-phosphate + L-serine = D-glyceraldehyde 3-phosphate + L-tryptophan + H2O. The protein operates within amino-acid biosynthesis; L-tryptophan biosynthesis; L-tryptophan from chorismate: step 5/5. Its function is as follows. The alpha subunit is responsible for the aldol cleavage of indoleglycerol phosphate to indole and glyceraldehyde 3-phosphate. This Thermotoga petrophila (strain ATCC BAA-488 / DSM 13995 / JCM 10881 / RKU-1) protein is Tryptophan synthase alpha chain.